The sequence spans 1236 residues: MGEVKWTKEQQQAIDVHGCNLLVSAAAGSGKTAVLVERIIKMITDIKNPVDIDRLLVVTFTNAAASEMKERIGKAIGKELTKHPKSKQLQRQLTLLNRASITTIHSFCLETIRNNFHYIDLDPNFRIGDETETVLLKGEIIEGIFEDLYEPENCTQEFLNLVEFYSSNKDDVALQNIVLNLYDFVMSSKNPKKQLQDMAEQFNVDESYNFGESKWAKVLMDDVELELSGLKDMMEEALKLINDTNGLDAYLEGFTDELLMINDLILNAKTSWDSLYNGLSEVKFGRLKTCRNCEDKKTQEKVKDIRNKVKKQLQDEIKKKITSYSTKEIVTDLRNLYPIMKSLCDLVIEFMDRYSKAKKERGIIDFNDFEHFCLEILGHEEVALKLRQKYIEILVDEYQDSNYVQEAIINSIARRHEETGNPINVFMVGDVKQSIYRFRQAKPELFLKKYNSYLEGENAKERKVNLFKNFRSRKEVLDGVNFIFKQIMSENIGELEYGDDEALYLGADFEQYEDKSLVGGPIELNLIEKSKDETKEEESEEEEILSNIQVEARFVAKKINELVNPKIGEPFKVYDNELKAYRNVEYRDIVVLLRSTSNWAPVFTDEMKENLIPAYADVGNGYFETVEIKTILSLLEIIDNPRQDIPLIAVLRSPIASFTPEELIDIRLENKDGDFYGGLLKVASSEDRDDNWILFKRKCNSFLEKLNYWREKSIHMPIDEFIWYLYMETGYYGYVGALAGGMQRQANLKILFQRARQYEKTSYKGLFNFINFINRLKVSSGDMGSAKILGENDNVVRIMSIHKSKGLEFPVIILSALGKNFNMQDLNKRILYHDELGFGPDYIDLDKRIIYETVPKSALKKKIKLESLSEEMRILYVALTRAKEKLILTGAVNDIEKSAKKWSYALEGEDYKLSQYQVMTGKNYLDWICPVIMRHKDGEVLRELAGIEIFEKVNLLSDESSWKITTDNISGILQNDDETNEIILEDIKEIEDIEESSSYYDEINERLNFKYKYIESSKLPTLLTVTELKRMKNSSMYEDYSRDMYTPKLVKKPMFMEKDKKLKGAEKGTAMHAVMQKINYSEELTIEDINRQMETMVEKEFITKEQADSVEAEKILNFFKSNIGKRLLKAENVRRETPFHMELKSTEIYESLPKEIYENENIMIQGIIDCYFEEEDGIVLLDYKSDYFKEGQEEAIIKKYKVQIDYYARAIEELTGKVVKEKYLYLFYGDKEVEIK.

Positions 4–473 constitute a UvrD-like helicase ATP-binding domain; it reads VKWTKEQQQA…VNLFKNFRSR (470 aa). 25-32 serves as a coordination point for ATP; that stretch reads AAAGSGKT. The UvrD-like helicase C-terminal domain occupies 512-806; it reads YEDKSLVGGP…RIMSIHKSKG (295 aa).

Belongs to the helicase family. AddA subfamily. Heterodimer of AddA and AddB/RexB. It depends on Mg(2+) as a cofactor.

It carries out the reaction Couples ATP hydrolysis with the unwinding of duplex DNA by translocating in the 3'-5' direction.. The enzyme catalyses ATP + H2O = ADP + phosphate + H(+). In terms of biological role, the heterodimer acts as both an ATP-dependent DNA helicase and an ATP-dependent, dual-direction single-stranded exonuclease. Recognizes the chi site generating a DNA molecule suitable for the initiation of homologous recombination. The AddA nuclease domain is required for chi fragment generation; this subunit has the helicase and 3' -&gt; 5' nuclease activities. This is ATP-dependent helicase/nuclease subunit A from Clostridium novyi (strain NT).